The following is a 156-amino-acid chain: MNINATILGQAIAFVLFVWFCMKYVWPPMMAAIEKRQKEIADGLASAERAKKDLNLAQANATDQLKKAKADAQVIIEQANKRRAQILDEAKAEAEAERNKIVAQAQAEIEAERKRAREELRKQVAVLAIAGAEKIIERSVDEAANSDIVDKLVAEL.

A helical membrane pass occupies residues 7–26; sequence ILGQAIAFVLFVWFCMKYVW.

Belongs to the ATPase B chain family. F-type ATPases have 2 components, F(1) - the catalytic core - and F(0) - the membrane proton channel. F(1) has five subunits: alpha(3), beta(3), gamma(1), delta(1), epsilon(1). F(0) has three main subunits: a(1), b(2) and c(10-14). The alpha and beta chains form an alternating ring which encloses part of the gamma chain. F(1) is attached to F(0) by a central stalk formed by the gamma and epsilon chains, while a peripheral stalk is formed by the delta and b chains.

The protein resides in the cell inner membrane. F(1)F(0) ATP synthase produces ATP from ADP in the presence of a proton or sodium gradient. F-type ATPases consist of two structural domains, F(1) containing the extramembraneous catalytic core and F(0) containing the membrane proton channel, linked together by a central stalk and a peripheral stalk. During catalysis, ATP synthesis in the catalytic domain of F(1) is coupled via a rotary mechanism of the central stalk subunits to proton translocation. Its function is as follows. Component of the F(0) channel, it forms part of the peripheral stalk, linking F(1) to F(0). The chain is ATP synthase subunit b from Pectobacterium atrosepticum (strain SCRI 1043 / ATCC BAA-672) (Erwinia carotovora subsp. atroseptica).